The primary structure comprises 293 residues: MQIRRRSPNPPVEVDTLRYQVKVPDGEPRHILEEIVWHKEKEVDRLRESLPLLELRKQVQHLPPPQDFLGAITQGKTQPALIAEVKKASPSKGVIREDFDPVAIAQAYVKGGASCLSVLTDAKFFQGSFENLALVRQSVDLPLLCKEFILYPYQIYLARTKGADAVLLIAAILSDRDLSYFLKIIQTLGMTALIEVHSLTELDRVLAIEGVSLIGINNRNLETFEVDLKTTSQLLAARRDKIQALGIKIISESGLHTPDDLQFVQQAGSDGVLIGESLVKQPDPTQAIANLFG.

The protein belongs to the TrpC family.

The catalysed reaction is 1-(2-carboxyphenylamino)-1-deoxy-D-ribulose 5-phosphate + H(+) = (1S,2R)-1-C-(indol-3-yl)glycerol 3-phosphate + CO2 + H2O. Its pathway is amino-acid biosynthesis; L-tryptophan biosynthesis; L-tryptophan from chorismate: step 4/5. This chain is Indole-3-glycerol phosphate synthase, found in Rippkaea orientalis (strain PCC 8801 / RF-1) (Cyanothece sp. (strain PCC 8801)).